Here is a 953-residue protein sequence, read N- to C-terminus: Pyruvate, phosphate dikinase, chloroplastic (953 aa).

Residues 1–77 constitute a chloroplast transit peptide; that stretch reads MMSSLSVEGM…VLNPVSPPVT (77 aa). The segment at 55-74 is disordered; the sequence is PELRSSGLTPPRAVLNPVSP. The residue at position 533 (threonine 533) is a Phosphothreonine; by PDRP1. The active-site Tele-phosphohistidine intermediate is the histidine 535. Substrate contacts are provided by arginine 641, arginine 698, glutamate 827, glycine 848, threonine 849, asparagine 850, and aspartate 851. Position 827 (glutamate 827) interacts with Mg(2+). Residue aspartate 851 participates in Mg(2+) binding. Cysteine 913 (proton donor) is an active-site residue.

It belongs to the PEP-utilizing enzyme family. In terms of assembly, homotetramer. The cofactor is Mg(2+). Phosphorylation of Thr-533 in the dark inactivates the enzyme. Dephosphorylation upon light stimulation reactivates the enzyme. In terms of tissue distribution, isoform 1 mainly localized in mesophyll cells and only a low level is found in bundle sheath cells. Isoform 2 is expressed in roots and stems.

It localises to the plastid. The protein localises to the chloroplast. Its subcellular location is the cytoplasm. It catalyses the reaction pyruvate + phosphate + ATP = phosphoenolpyruvate + AMP + diphosphate + H(+). It participates in photosynthesis; C4 acid pathway. Activated by light-induced dephosphorylation. Inhibited by dark-induced phosphorylation. Both reactions are catalyzed by PDRP1. Its function is as follows. Formation of phosphoenolpyruvate, which is the primary acceptor of CO(2) in C4 and some Crassulacean acid metabolism plants. The sequence is that of Pyruvate, phosphate dikinase, chloroplastic (PPDK) from Flaveria trinervia (Clustered yellowtops).